Consider the following 123-residue polypeptide: Small ribosomal subunit protein uS13 (123 aa).

The interval 93 to 123 (RRNLPVRGQKTKTNARTRKGPKRAIGGKKKK) is disordered.

This sequence belongs to the universal ribosomal protein uS13 family. As to quaternary structure, part of the 30S ribosomal subunit. Forms a loose heterodimer with protein S19. Forms two bridges to the 50S subunit in the 70S ribosome.

In terms of biological role, located at the top of the head of the 30S subunit, it contacts several helices of the 16S rRNA. In the 70S ribosome it contacts the 23S rRNA (bridge B1a) and protein L5 of the 50S subunit (bridge B1b), connecting the 2 subunits; these bridges are implicated in subunit movement. Contacts the tRNAs in the A and P-sites. The protein is Small ribosomal subunit protein uS13 of Clostridium botulinum (strain Kyoto / Type A2).